The primary structure comprises 154 residues: Myoglobin (154 aa).

The Globin domain occupies 2 to 148 (VLSDAEWHLV…FRKDIAAKYK (147 aa)). Serine 4 is modified (phosphoserine). Histidine 65 provides a ligand contact to nitrite. Histidine 65 provides a ligand contact to O2. Threonine 68 is subject to Phosphothreonine. A heme b-binding site is contributed by histidine 94.

The protein belongs to the globin family. In terms of assembly, monomeric.

Its subcellular location is the cytoplasm. It localises to the sarcoplasm. The enzyme catalyses Fe(III)-heme b-[protein] + nitric oxide + H2O = Fe(II)-heme b-[protein] + nitrite + 2 H(+). It carries out the reaction H2O2 + AH2 = A + 2 H2O. Monomeric heme protein which primary function is to store oxygen and facilitate its diffusion within muscle tissues. Reversibly binds oxygen through a pentacoordinated heme iron and enables its timely and efficient release as needed during periods of heightened demand. Depending on the oxidative conditions of tissues and cells, and in addition to its ability to bind oxygen, it also has a nitrite reductase activity whereby it regulates the production of bioactive nitric oxide. Under stress conditions, like hypoxia and anoxia, it also protects cells against reactive oxygen species thanks to its pseudoperoxidase activity. The protein is Myoglobin (MB) of Balaenoptera acutorostrata (Common minke whale).